We begin with the raw amino-acid sequence, 427 residues long: Enolase (427 aa).

A (2R)-2-phosphoglycerate-binding site is contributed by Gln-163. The active-site Proton donor is Glu-205. Asp-242, Glu-285, and Asp-312 together coordinate Mg(2+). The (2R)-2-phosphoglycerate site is built by Lys-337, Arg-366, Ser-367, and Lys-388. The active-site Proton acceptor is the Lys-337.

Belongs to the enolase family. It depends on Mg(2+) as a cofactor.

It localises to the cytoplasm. The protein localises to the secreted. It is found in the cell surface. It carries out the reaction (2R)-2-phosphoglycerate = phosphoenolpyruvate + H2O. It functions in the pathway carbohydrate degradation; glycolysis; pyruvate from D-glyceraldehyde 3-phosphate: step 4/5. Catalyzes the reversible conversion of 2-phosphoglycerate (2-PG) into phosphoenolpyruvate (PEP). It is essential for the degradation of carbohydrates via glycolysis. The polypeptide is Enolase (Burkholderia multivorans (strain ATCC 17616 / 249)).